A 572-amino-acid polypeptide reads, in one-letter code: Mitochondrial distribution and morphology protein 34 (572 aa).

In terms of domain architecture, SMP-LTD spans 1–195 (MAFNFNWSPL…LPAIIHRLSL (195 aa)). Disordered stretches follow at residues 208-236 (LQTQ…VDAL), 296-405 (PSDQ…CSAP), 455-518 (RDTA…PFIN), and 551-572 (NACG…AYGH). A compositionally biased stretch (polar residues) spans 296–347 (PSDQTDASGGVTSPFSPVLSRTQSQVGSMSSFPDSASMVSNQSRSSTPSHTF). The span at 358 to 370 (RHSKAHARKRKKR) shows a compositional bias: basic residues. The segment covering 371–381 (VVDLRRPKTTD) has biased composition (basic and acidic residues). Polar residues-rich tracts occupy residues 387 to 401 (SDES…TPSI) and 498 to 511 (ATGS…QLPS).

This sequence belongs to the MDM34 family. As to quaternary structure, component of the ER-mitochondria encounter structure (ERMES) or MDM complex, composed of mmm1, mdm10, mdm12 and mdm34.

It is found in the mitochondrion outer membrane. Its function is as follows. Component of the ERMES/MDM complex, which serves as a molecular tether to connect the endoplasmic reticulum (ER) and mitochondria. Components of this complex are involved in the control of mitochondrial shape and protein biogenesis, and function in nonvesicular lipid trafficking between the ER and mitochondria. Mdm34 is required for the interaction of the ER-resident membrane protein mmm1 and the outer mitochondrial membrane-resident beta-barrel protein mdm10. The sequence is that of Mitochondrial distribution and morphology protein 34 from Neosartorya fischeri (strain ATCC 1020 / DSM 3700 / CBS 544.65 / FGSC A1164 / JCM 1740 / NRRL 181 / WB 181) (Aspergillus fischerianus).